The following is a 243-amino-acid chain: Transmembrane protein 176A (243 aa).

Ser42 carries the post-translational modification Phosphoserine. Helical transmembrane passes span 65-85 (WVVQ…LYIC), 92-112 (TQGA…VAFL), 122-142 (ALMR…AIVI), and 204-224 (LLGV…VYLW).

Belongs to the TMEM176 family. Interacts with MCOLN2.

It is found in the membrane. The protein is Transmembrane protein 176A (Tmem176a) of Rattus norvegicus (Rat).